Here is a 303-residue protein sequence, read N- to C-terminus: Holdfast attachment protein D (303 aa).

The segment covering 266-281 has biased composition (polar residues); the sequence is SARSTMSGPKSCSTTF. Residues 266–303 form a disordered region; the sequence is SARSTMSGPKSCSTTFRPIRAAASRRPPASAGTRAMTR. The segment covering 282–303 has biased composition (low complexity); the sequence is RPIRAAASRRPPASAGTRAMTR.

It is found in the cell outer membrane. In terms of biological role, involved in attachment of the holdfast to the cell. The holdfast is a structure that allows the bacteria to firmly adhere to surfaces. The protein is Holdfast attachment protein D (hfaD) of Caulobacter vibrioides (strain ATCC 19089 / CIP 103742 / CB 15) (Caulobacter crescentus).